The following is a 146-amino-acid chain: MLLTVYLKDKQYYLFKLFREIWPSCTTECRICLETLGTEGGVVGVPDNGLLNLDKMFHAECIERWKRGRNRDPFNRAIKYYFAFPPPTLHECKALLEHTRGFIGDDEMDRVYSLVHQRVTTEDALDVELNFARFFKDDARAVGGGQ.

This is an uncharacterized protein from Orgyia pseudotsugata multicapsid polyhedrosis virus (OpMNPV).